Reading from the N-terminus, the 65-residue chain is DNA gyrase inhibitor YacG (65 aa).

4 residues coordinate Zn(2+): Cys-10, Cys-13, Cys-29, and Cys-33. The disordered stretch occupies residues 45–65; the sequence is EKAIPGAPDMSDSDGWSEDQY. Residues 55-65 show a composition bias toward acidic residues; sequence SDSDGWSEDQY.

The protein belongs to the DNA gyrase inhibitor YacG family. Interacts with GyrB. Requires Zn(2+) as cofactor.

Its function is as follows. Inhibits all the catalytic activities of DNA gyrase by preventing its interaction with DNA. Acts by binding directly to the C-terminal domain of GyrB, which probably disrupts DNA binding by the gyrase. The polypeptide is DNA gyrase inhibitor YacG (Vibrio cholerae serotype O1 (strain ATCC 39315 / El Tor Inaba N16961)).